The primary structure comprises 59 residues: Conotoxin Sr5.4 (59 aa).

An N-terminal signal peptide occupies residues M1–A22. A propeptide spanning residues Q23–H44 is cleaved from the precursor.

This sequence belongs to the conotoxin T superfamily. Contains 2 disulfide bonds that can be either 'C1-C3, C2-C4' or 'C1-C4, C2-C3', since these disulfide connectivities have been observed for conotoxins with cysteine framework V (for examples, see AC P0DQQ7 and AC P81755). As to expression, expressed by the venom duct.

It localises to the secreted. This is Conotoxin Sr5.4 from Conus spurius (Alphabet cone).